Consider the following 478-residue polypeptide: NADH oxidase (478 aa).

FAD contacts are provided by residues Gly-8–Ala-12, Asp-33, Cys-43, Val-80, Ala-111–Ala-114, Lys-149, and Tyr-177. Catalysis depends on His-11, which acts as the Proton acceptor. The Redox-active role is filled by Cys-43. A Cysteine sulfinic acid (-SO2H) modification is found at Cys-43. NAD(+)-binding positions include Val-170–Ala-185, Asp-197, and Gly-264. FAD contacts are provided by residues Leu-295–Gly-305, Leu-322, Ala-323, and Thr-324. Ala-353 contacts NAD(+). Phe-450 is a binding site for FAD.

The protein belongs to the class-III pyridine nucleotide-disulfide oxidoreductase family. It depends on FAD as a cofactor.

It carries out the reaction 2 NADH + O2 + 2 H(+) = 2 NAD(+) + 2 H2O. In terms of biological role, catalyzes the four-electron reduction of molecular oxygen to water. This Mycoplasma genitalium (strain ATCC 33530 / DSM 19775 / NCTC 10195 / G37) (Mycoplasmoides genitalium) protein is NADH oxidase (nox).